The following is a 178-amino-acid chain: NADH-quinone oxidoreductase subunit B (178 aa).

Residues Cys-45, Cys-46, Cys-111, and Cys-140 each contribute to the [4Fe-4S] cluster site.

The protein belongs to the complex I 20 kDa subunit family. As to quaternary structure, NDH-1 is composed of 15 different subunits. Subunits NuoB, C, D, E, F, and G constitute the peripheral sector of the complex. [4Fe-4S] cluster is required as a cofactor.

It localises to the cell membrane. It catalyses the reaction a quinone + NADH + 5 H(+)(in) = a quinol + NAD(+) + 4 H(+)(out). Functionally, NDH-1 shuttles electrons from NADH, via FMN and iron-sulfur (Fe-S) centers, to quinones in the respiratory chain. The immediate electron acceptor for the enzyme in this species is believed to be a menaquinone. Couples the redox reaction to proton translocation (for every two electrons transferred, four hydrogen ions are translocated across the cytoplasmic membrane), and thus conserves the redox energy in a proton gradient. The chain is NADH-quinone oxidoreductase subunit B from Deinococcus deserti (strain DSM 17065 / CIP 109153 / LMG 22923 / VCD115).